The following is a 260-amino-acid chain: 3'-5' ssDNA/RNA exonuclease TatD (260 aa).

The a divalent metal cation site is built by Glu-92, His-128, and His-153.

The protein belongs to the metallo-dependent hydrolases superfamily. TatD-type hydrolase family. TatD subfamily. Monomer. It depends on Mg(2+) as a cofactor.

It localises to the cytoplasm. Its function is as follows. 3'-5' exonuclease that prefers single-stranded DNA and RNA. May play a role in the H(2)O(2)-induced DNA damage repair. The chain is 3'-5' ssDNA/RNA exonuclease TatD from Pectobacterium parmentieri (strain WPP163) (Pectobacterium wasabiae (strain WPP163)).